We begin with the raw amino-acid sequence, 136 residues long: Large ribosomal subunit protein uL16 (136 aa).

It belongs to the universal ribosomal protein uL16 family. In terms of assembly, part of the 50S ribosomal subunit.

Its function is as follows. Binds 23S rRNA and is also seen to make contacts with the A and possibly P site tRNAs. In Salmonella agona (strain SL483), this protein is Large ribosomal subunit protein uL16.